Consider the following 224-residue polypeptide: Probable GTP-binding protein EngB (224 aa).

The region spanning 31–204 (VGVEIAFAGR…LGILDQWCKP (174 aa)) is the EngB-type G domain. GTP contacts are provided by residues 39–46 (GRSNAGKS), 65–69 (GRTQL), 83–86 (DLPG), 150–153 (TKAD), and 183–185 (FSS). Residues serine 46 and threonine 67 each coordinate Mg(2+).

The protein belongs to the TRAFAC class TrmE-Era-EngA-EngB-Septin-like GTPase superfamily. EngB GTPase family. Mg(2+) is required as a cofactor.

Functionally, necessary for normal cell division and for the maintenance of normal septation. In Shewanella piezotolerans (strain WP3 / JCM 13877), this protein is Probable GTP-binding protein EngB.